The sequence spans 1387 residues: Regulator of G-protein signaling 12 (1387 aa).

Residues 21 to 97 (SVEVARGRAG…GVLRMVISEG (77 aa)) form the PDZ domain. Residues Ser171 and Ser194 each carry the phosphoserine modification. A Glycyl lysine isopeptide (Lys-Gly) (interchain with G-Cter in SUMO2) cross-link involves residue Lys195. Positions 227–339 (VAMVVGYLGS…GALRTSCHVF (113 aa)) constitute a PID domain. 2 disordered regions span residues 409 to 428 (ADAH…IGNF) and 442 to 488 (LGGG…PLET). A compositionally biased stretch (polar residues) spans 412–428 (HQNNSTSSNSDSGIGNF). 2 positions are modified to omega-N-methylarginine: Arg524 and Arg633. Residues 620-650 (RKTKEDKKSSKLGRGVALAQTSQRTSARRSF) form a disordered region. A phosphoserine mark is found at Ser661 and Ser671. Residues 715-832 (SFERLLQDPV…LKSQLYQECV (118 aa)) enclose the RGS domain. Positions 842 to 934 (PDSQQVPSSP…ANGGLCRRES (93 aa)) are disordered. Residues 849-869 (SSPASKHSISSDHSNVSTPKK) show a composition bias toward low complexity. 2 positions are modified to phosphoserine: Ser850 and Ser879. Positions 914-923 (DHGDHAHDAL) are enriched in basic and acidic residues. Ser943 is subject to Phosphoserine. RBD domains follow at residues 962 to 1032 (KHCC…LGKR) and 1034 to 1104 (LFRL…LEER). A compositionally biased stretch (basic and acidic residues) spans 1103 to 1117 (ERDPSRGKVSTEKQK). The tract at residues 1103–1168 (ERDPSRGKVS…ARDPRLSKRE (66 aa)) is disordered. Residues 1122-1133 (KQSSAVNSSPRN) show a composition bias toward polar residues. Positions 1151–1168 (IRGENGKSARDPRLSKRE) are enriched in basic and acidic residues. Residues 1187-1209 (AEEFFELISKAQSNRADDQRGLL) enclose the GoLoco domain. Disordered regions lie at residues 1224–1325 (PGSS…EGTT) and 1349–1387 (ADLT…TSRF). A compositionally biased stretch (low complexity) spans 1261-1280 (SDSPATSPASAQSPCSAYSP). Residues 1315–1325 (SCISTVQEGTT) are compositionally biased toward polar residues. A compositionally biased stretch (pro residues) spans 1367–1380 (LPPPPLPQDTPGPT).

Interacts with GNAI1, GNAI2 and GNAI3; the interactions are GDP-dependent. In terms of tissue distribution, detected in brain cortex GABAergic neurons, in striatum and substantia nigra, and in the Purkinje cell layer in the cerebellum and hippocampus (at protein level). Expressed at high levels in brain and lung and lower levels in testis, heart, and spleen.

It localises to the nucleus. The protein resides in the cytoplasm. Its subcellular location is the cell projection. The protein localises to the dendrite. It is found in the synapse. Regulates G protein-coupled receptor signaling cascades. Inhibits signal transduction by increasing the GTPase activity of G protein alpha subunits, thereby driving them into their inactive GDP-bound form. The sequence is that of Regulator of G-protein signaling 12 (Rgs12) from Rattus norvegicus (Rat).